Consider the following 274-residue polypeptide: 2,3,4,5-tetrahydropyridine-2,6-dicarboxylate N-succinyltransferase (274 aa).

Arg-104 and Asp-141 together coordinate substrate.

This sequence belongs to the transferase hexapeptide repeat family. As to quaternary structure, homotrimer.

The protein localises to the cytoplasm. It catalyses the reaction (S)-2,3,4,5-tetrahydrodipicolinate + succinyl-CoA + H2O = (S)-2-succinylamino-6-oxoheptanedioate + CoA. The protein operates within amino-acid biosynthesis; L-lysine biosynthesis via DAP pathway; LL-2,6-diaminopimelate from (S)-tetrahydrodipicolinate (succinylase route): step 1/3. In Shewanella sediminis (strain HAW-EB3), this protein is 2,3,4,5-tetrahydropyridine-2,6-dicarboxylate N-succinyltransferase.